A 609-amino-acid polypeptide reads, in one-letter code: UvrABC system protein C (609 aa).

In terms of domain architecture, GIY-YIG spans 16-94 (SSAGVYRMYD…IKQYMPKYNV (79 aa)). Residues 203 to 238 (QQVISALVDKMELAAERQAYEQAARFRDQIMALRKV) enclose the UVR domain.

This sequence belongs to the UvrC family. In terms of assembly, interacts with UvrB in an incision complex.

It is found in the cytoplasm. Its function is as follows. The UvrABC repair system catalyzes the recognition and processing of DNA lesions. UvrC both incises the 5' and 3' sides of the lesion. The N-terminal half is responsible for the 3' incision and the C-terminal half is responsible for the 5' incision. This Shewanella baltica (strain OS195) protein is UvrABC system protein C.